A 222-amino-acid chain; its full sequence is Ras-related protein RabT1 (222 aa).

37-44 is a binding site for GTP; it reads GDNKTGKS. Residues 59–66 carry the Effector region motif; sequence VSSIGVDF. GTP contacts are provided by residues 85 to 89 and 145 to 148; these read DVNSC and NKCD. At cysteine 219 the chain carries Cysteine methyl ester. Residue cysteine 219 is the site of S-geranylgeranyl cysteine attachment. Positions 220–222 are cleaved as a propeptide — removed in mature form; it reads NIL.

The protein belongs to the small GTPase superfamily. Rab family.

The protein localises to the cell membrane. The sequence is that of Ras-related protein RabT1 (rabT1) from Dictyostelium discoideum (Social amoeba).